Reading from the N-terminus, the 102-residue chain is Acid shock protein (102 aa).

Positions 1-21 are cleaved as a signal peptide; that stretch reads MKKVLALVVAAAMGLSSAAFA. Over residues 22–41 the composition is skewed to low complexity; it reads AETATTPAPTATTTKAAPAK. The propeptide occupies 22-58; that stretch reads AETATTPAPTATTTKAAPAKTTHHKKQHKAAPAQKAQ. The tract at residues 22-102 is disordered; sequence AETATTPAPT…PAKPAAQPAA (81 aa). Residues 80 to 90 are compositionally biased toward basic residues; it reads AAKKHAKKHSH. Residues 91-102 show a composition bias toward low complexity; that stretch reads QQPAKPAAQPAA.

This sequence belongs to the Asr family. Proteolytic processing gives rise to the active protein.

It localises to the periplasm. Functionally, required for growth and/or survival at acidic conditions. This chain is Acid shock protein, found in Escherichia coli O45:K1 (strain S88 / ExPEC).